The sequence spans 492 residues: Glutamyl-tRNA(Gln) amidotransferase subunit A (492 aa).

Catalysis depends on charge relay system residues K78 and S158. The active-site Acyl-ester intermediate is the S182.

Belongs to the amidase family. GatA subfamily. As to quaternary structure, heterotrimer of A, B and C subunits.

It carries out the reaction L-glutamyl-tRNA(Gln) + L-glutamine + ATP + H2O = L-glutaminyl-tRNA(Gln) + L-glutamate + ADP + phosphate + H(+). Its function is as follows. Allows the formation of correctly charged Gln-tRNA(Gln) through the transamidation of misacylated Glu-tRNA(Gln) in organisms which lack glutaminyl-tRNA synthetase. The reaction takes place in the presence of glutamine and ATP through an activated gamma-phospho-Glu-tRNA(Gln). The chain is Glutamyl-tRNA(Gln) amidotransferase subunit A from Parvibaculum lavamentivorans (strain DS-1 / DSM 13023 / NCIMB 13966).